Consider the following 867-residue polypeptide: Alanine--tRNA ligase (867 aa).

Zn(2+)-binding residues include H555, H559, C657, and H661.

The protein belongs to the class-II aminoacyl-tRNA synthetase family. It depends on Zn(2+) as a cofactor.

The protein resides in the cytoplasm. The catalysed reaction is tRNA(Ala) + L-alanine + ATP = L-alanyl-tRNA(Ala) + AMP + diphosphate. Catalyzes the attachment of alanine to tRNA(Ala) in a two-step reaction: alanine is first activated by ATP to form Ala-AMP and then transferred to the acceptor end of tRNA(Ala). Also edits incorrectly charged Ser-tRNA(Ala) and Gly-tRNA(Ala) via its editing domain. This chain is Alanine--tRNA ligase, found in Psychromonas ingrahamii (strain DSM 17664 / CCUG 51855 / 37).